The primary structure comprises 460 residues: Tyrosine phenol-lyase (460 aa).

N6-(pyridoxal phosphate)lysine is present on Lys260.

The protein belongs to the beta-eliminating lyase family. Homotetramer. The cofactor is pyridoxal 5'-phosphate.

It carries out the reaction L-tyrosine + H2O = phenol + pyruvate + NH4(+). The protein is Tyrosine phenol-lyase of Fusobacterium nucleatum subsp. nucleatum (strain ATCC 25586 / DSM 15643 / BCRC 10681 / CIP 101130 / JCM 8532 / KCTC 2640 / LMG 13131 / VPI 4355).